The sequence spans 1036 residues: Protein translocase subunit SecA, chloroplastic (1036 aa).

A chloroplast-targeting transit peptide spans 1 to 76 (MESCARSASQ…KIGELMQVRA (76 aa)). Residue 186-193 (MRTGEGKT) participates in ATP binding. Positions 995–1036 (NQEQQQKGKPDSSNVENKRIGDANLNPVSVTESPSSDSPQNT) are disordered. Residues 1000-1015 (QKGKPDSSNVENKRIG) show a composition bias toward basic and acidic residues. The span at 1020 to 1036 (NPVSVTESPSSDSPQNT) shows a compositional bias: polar residues.

Belongs to the SecA family.

It is found in the plastid. The protein localises to the chloroplast stroma. Its subcellular location is the chloroplast thylakoid membrane. It carries out the reaction ATP + H2O + chloroplast-proteinSide 1 = ADP + phosphate + chloroplast-proteinSide 2.. Has a central role in coupling the hydrolysis of ATP to the transfer of proteins across the thylakoid membrane. The polypeptide is Protein translocase subunit SecA, chloroplastic (Spinacia oleracea (Spinach)).